Consider the following 512-residue polypeptide: Maturase K (512 aa).

The protein belongs to the intron maturase 2 family. MatK subfamily.

Its subcellular location is the plastid. The protein resides in the chloroplast. Functionally, usually encoded in the trnK tRNA gene intron. Probably assists in splicing its own and other chloroplast group II introns. In Alisma canaliculatum (Water plantain), this protein is Maturase K.